A 163-amino-acid chain; its full sequence is Nucleotide-binding protein Cj0374 (163 aa).

It belongs to the YajQ family.

In terms of biological role, nucleotide-binding protein. The chain is Nucleotide-binding protein Cj0374 from Campylobacter jejuni subsp. jejuni serotype O:2 (strain ATCC 700819 / NCTC 11168).